A 456-amino-acid polypeptide reads, in one-letter code: ATP synthase subunit beta 1 (456 aa).

152–159 (GGAGVGKS) lines the ATP pocket.

This sequence belongs to the ATPase alpha/beta chains family. In terms of assembly, F-type ATPases have 2 components, CF(1) - the catalytic core - and CF(0) - the membrane proton channel. CF(1) has five subunits: alpha(3), beta(3), gamma(1), delta(1), epsilon(1). CF(0) has three main subunits: a(1), b(2) and c(9-12). The alpha and beta chains form an alternating ring which encloses part of the gamma chain. CF(1) is attached to CF(0) by a central stalk formed by the gamma and epsilon chains, while a peripheral stalk is formed by the delta and b chains.

The protein resides in the cell membrane. The enzyme catalyses ATP + H2O + 4 H(+)(in) = ADP + phosphate + 5 H(+)(out). Functionally, produces ATP from ADP in the presence of a proton gradient across the membrane. The catalytic sites are hosted primarily by the beta subunits. This Listeria welshimeri serovar 6b (strain ATCC 35897 / DSM 20650 / CCUG 15529 / CIP 8149 / NCTC 11857 / SLCC 5334 / V8) protein is ATP synthase subunit beta 1.